Consider the following 226-residue polypeptide: Cytidylate kinase (226 aa).

10–18 (GPASSGKST) provides a ligand contact to ATP.

This sequence belongs to the cytidylate kinase family. Type 1 subfamily.

It localises to the cytoplasm. The enzyme catalyses CMP + ATP = CDP + ADP. It carries out the reaction dCMP + ATP = dCDP + ADP. In Streptococcus equi subsp. equi (strain 4047), this protein is Cytidylate kinase.